A 318-amino-acid chain; its full sequence is Aspartate carbamoyltransferase catalytic subunit (318 aa).

Arg-64 and Thr-65 together coordinate carbamoyl phosphate. Position 92 (Lys-92) interacts with L-aspartate. The carbamoyl phosphate site is built by Arg-114, His-142, and Gln-145. Residues Arg-176 and Arg-230 each coordinate L-aspartate. Carbamoyl phosphate is bound by residues Gly-271 and Pro-272.

It belongs to the aspartate/ornithine carbamoyltransferase superfamily. ATCase family. In terms of assembly, heterododecamer (2C3:3R2) of six catalytic PyrB chains organized as two trimers (C3), and six regulatory PyrI chains organized as three dimers (R2).

It carries out the reaction carbamoyl phosphate + L-aspartate = N-carbamoyl-L-aspartate + phosphate + H(+). It participates in pyrimidine metabolism; UMP biosynthesis via de novo pathway; (S)-dihydroorotate from bicarbonate: step 2/3. Functionally, catalyzes the condensation of carbamoyl phosphate and aspartate to form carbamoyl aspartate and inorganic phosphate, the committed step in the de novo pyrimidine nucleotide biosynthesis pathway. This Desulfovibrio desulfuricans (strain ATCC 27774 / DSM 6949 / MB) protein is Aspartate carbamoyltransferase catalytic subunit.